Consider the following 327-residue polypeptide: Phenylalanine--tRNA ligase alpha subunit (327 aa).

Glutamate 252 contributes to the Mg(2+) binding site.

Belongs to the class-II aminoacyl-tRNA synthetase family. Phe-tRNA synthetase alpha subunit type 1 subfamily. Tetramer of two alpha and two beta subunits. It depends on Mg(2+) as a cofactor.

Its subcellular location is the cytoplasm. It catalyses the reaction tRNA(Phe) + L-phenylalanine + ATP = L-phenylalanyl-tRNA(Phe) + AMP + diphosphate + H(+). The protein is Phenylalanine--tRNA ligase alpha subunit of Shigella flexneri.